Consider the following 301-residue polypeptide: Homoserine O-acetyltransferase (301 aa).

The active-site Acyl-thioester intermediate is Cys-142. Residues Lys-163 and Ser-192 each contribute to the substrate site. The active-site Proton acceptor is the His-235. Residue Glu-237 is part of the active site. Arg-249 provides a ligand contact to substrate.

Belongs to the MetA family.

Its subcellular location is the cytoplasm. It catalyses the reaction L-homoserine + acetyl-CoA = O-acetyl-L-homoserine + CoA. It functions in the pathway amino-acid biosynthesis; L-methionine biosynthesis via de novo pathway; O-acetyl-L-homoserine from L-homoserine: step 1/1. In terms of biological role, transfers an acetyl group from acetyl-CoA to L-homoserine, forming acetyl-L-homoserine. The polypeptide is Homoserine O-acetyltransferase (Clostridium acetobutylicum (strain ATCC 824 / DSM 792 / JCM 1419 / IAM 19013 / LMG 5710 / NBRC 13948 / NRRL B-527 / VKM B-1787 / 2291 / W)).